A 206-amino-acid chain; its full sequence is Guanylate kinase (206 aa).

The 181-residue stretch at 3 to 183 folds into the Guanylate kinase-like domain; the sequence is GNLYILSAPS…ALTELKSILT (181 aa). Residue 10–17 participates in ATP binding; the sequence is APSGAGKS.

Belongs to the guanylate kinase family.

It localises to the cytoplasm. The enzyme catalyses GMP + ATP = GDP + ADP. Essential for recycling GMP and indirectly, cGMP. In Haemophilus ducreyi (strain 35000HP / ATCC 700724), this protein is Guanylate kinase.